A 972-amino-acid polypeptide reads, in one-letter code: Isoleucine--tRNA ligase (972 aa).

The 'HIGH' region motif lies at 63-73 (PYANGNIHIGH). Position 603 (E603) interacts with L-isoleucyl-5'-AMP. The short motif at 644-648 (KMSKS) is the 'KMSKS' region element. K647 is an ATP binding site.

It belongs to the class-I aminoacyl-tRNA synthetase family. IleS type 1 subfamily. Monomer.

Its subcellular location is the cytoplasm. The enzyme catalyses tRNA(Ile) + L-isoleucine + ATP = L-isoleucyl-tRNA(Ile) + AMP + diphosphate. Its function is as follows. Catalyzes the attachment of isoleucine to tRNA(Ile). As IleRS can inadvertently accommodate and process structurally similar amino acids such as valine, to avoid such errors it has two additional distinct tRNA(Ile)-dependent editing activities. One activity is designated as 'pretransfer' editing and involves the hydrolysis of activated Val-AMP. The other activity is designated 'posttransfer' editing and involves deacylation of mischarged Val-tRNA(Ile). The chain is Isoleucine--tRNA ligase from Brucella melitensis biotype 1 (strain ATCC 23456 / CCUG 17765 / NCTC 10094 / 16M).